Here is a 198-residue protein sequence, read N- to C-terminus: Nucleoid occlusion factor SlmA (198 aa).

Residues 9–70 enclose the HTH tetR-type domain; it reads RNRREEILQA…SLIEFIEDSL (62 aa). Residues 33-52 constitute a DNA-binding region (H-T-H motif); it reads TTAKLAANVGVSEAALYRHF. Residues 119-144 adopt a coiled-coil conformation; that stretch reads DRLQGRINQLYERIEVQLRQVLRERK.

It belongs to the nucleoid occlusion factor SlmA family. Homodimer. Interacts with FtsZ.

The protein localises to the cytoplasm. Its subcellular location is the nucleoid. Functionally, required for nucleoid occlusion (NO) phenomenon, which prevents Z-ring formation and cell division over the nucleoid. Acts as a DNA-associated cell division inhibitor that binds simultaneously chromosomal DNA and FtsZ, and disrupts the assembly of FtsZ polymers. SlmA-DNA-binding sequences (SBS) are dispersed on non-Ter regions of the chromosome, preventing FtsZ polymerization at these regions. This is Nucleoid occlusion factor SlmA from Sodalis glossinidius (strain morsitans).